A 513-amino-acid chain; its full sequence is MSLLTTVLLLWGFTLGPGNALWLDSGSEPELRAEPQSLLEPWANLTLVCAVDLPTKVFELIMNGWFLSQVRLETPVLSYRFSLGAITSNNSGVYRCRCGVEPPVDIQLPALSKWTMLSNALEVTGKEPLPPPSAHADPVSWITPGGLPVYIMCRVAMRGVTYLLRKEGVDGTQKPDVQHKGTAGFLIYKPGNYSCSYLTHAGGKPSEPSAIVTIKMSATQLPPSLCLMGSYLTIYPQKTHETLACKAPRNAAEFQLRQGERVLNIQGFSPTRDATIYYVNLKELDNQSPFTCRYRMHKYMHVWSEDSKPVELMWSDEKLPAPVLTAEPSSHNLEPGSTVQLRCTAHKAGLRFGLQRQGKPDLVVVQMLNSSGTEAVFELHNISTIDSGNYSCIYMEQAPPFSGSASSEPLELRINGPAPKPRLEALWKGKVPLGHEAIFQCHGHVPRVSMELVREGFKTPFWMASTTSTSAFLKLSFVGPQHTGNYSCRYTALSPFTFESGISDPVEVVVEGS.

An N-terminal signal peptide occupies residues 1-20 (MSLLTTVLLLWGFTLGPGNA). 5 consecutive Ig-like V-type domains span residues 22–126 (WLDS…VTGK), 127–219 (EPLP…MSAT), 220–312 (QLPP…PVEL), 313–415 (MWSD…LRIN), and 416–513 (GPAP…VEGS). 3 N-linked (GlcNAc...) asparagine glycosylation sites follow: Asn44, Asn89, and Asn192. 5 disulfides stabilise this stretch: Cys49/Cys96, Cys153/Cys195, Cys245/Cys292, Cys343/Cys392, and Cys441/Cys488. N-linked (GlcNAc...) asparagine glycosylation is found at Asn369, Asn381, Asn389, and Asn485.

In terms of assembly, interacts with CRISP3. Isoform 1 is expressed in normal liver. Isoform 2 is expressed in the regenerating liver after partial hepatectomy and at very low levels in the normal lung, brain and testis.

The protein resides in the secreted. The sequence is that of Alpha-1B-glycoprotein from Rattus norvegicus (Rat).